Here is a 126-residue protein sequence, read N- to C-terminus: MAILGLGTDIVEIARIEAVISRSGERLARRVLSDNEWAIWETHQQPVRFLAKRFAVKEAAAKAFGTGIRNGLAFNQFEVFNDELGKPRLRLWGEALKLAERLGVAHMHVTLADERHYACATVIIES.

Positions 9 and 58 each coordinate Mg(2+).

It belongs to the P-Pant transferase superfamily. AcpS family. The cofactor is Mg(2+).

The protein localises to the cytoplasm. The catalysed reaction is apo-[ACP] + CoA = holo-[ACP] + adenosine 3',5'-bisphosphate + H(+). In terms of biological role, transfers the 4'-phosphopantetheine moiety from coenzyme A to a Ser of acyl-carrier-protein. This chain is Holo-[acyl-carrier-protein] synthase, found in Citrobacter koseri (strain ATCC BAA-895 / CDC 4225-83 / SGSC4696).